The chain runs to 173 residues: Zinc finger matrin-type protein 5 (173 aa).

The C3H1-type zinc finger occupies 51 to 79 (ERSKEVCRKFVQTGQCVFGTSCRFSHMSE). Residues 83 to 111 (KMLEQKIDDEKRQKEDPDQDGSSERSVDE) form a disordered region.

In terms of assembly, component of the U11/U12 snRNPs that are part of the U12-type spliceosome.

It is found in the nucleus. The sequence is that of Zinc finger matrin-type protein 5 (zmat5) from Danio rerio (Zebrafish).